The chain runs to 386 residues: Na(+)/H(+) antiporter NhaA (386 aa).

11 helical membrane-spanning segments follow: residues 10-30, 58-78, 94-114, 124-144, 154-174, 176-196, 199-219, 253-273, 283-303, 327-347, and 361-381; these read MGSA…IFAN, LLHW…GLEV, IFPA…YYLI, GWAI…ALLG, FLLA…AVFF, EELS…LITL, MKVG…AAVL, ILTP…NAGV, IFST…PLGV, VFAI…LAGL, and LSRL…YLLL.

Belongs to the NhaA Na(+)/H(+) (TC 2.A.33) antiporter family.

The protein localises to the cell inner membrane. The enzyme catalyses Na(+)(in) + 2 H(+)(out) = Na(+)(out) + 2 H(+)(in). Na(+)/H(+) antiporter that extrudes sodium in exchange for external protons. This chain is Na(+)/H(+) antiporter NhaA, found in Mannheimia succiniciproducens (strain KCTC 0769BP / MBEL55E).